Reading from the N-terminus, the 279-residue chain is Tryptophan 2,3-dioxygenase (279 aa).

Substrate is bound by residues 48–52 (FIVIH), tyrosine 110, and arginine 114. Histidine 237 lines the heme pocket. A substrate-binding site is contributed by threonine 251.

The protein belongs to the tryptophan 2,3-dioxygenase family. Homotetramer. Requires heme as cofactor.

It catalyses the reaction L-tryptophan + O2 = N-formyl-L-kynurenine. It functions in the pathway amino-acid degradation; L-tryptophan degradation via kynurenine pathway; L-kynurenine from L-tryptophan: step 1/2. Functionally, heme-dependent dioxygenase that catalyzes the oxidative cleavage of the L-tryptophan (L-Trp) pyrrole ring and converts L-tryptophan to N-formyl-L-kynurenine. Catalyzes the oxidative cleavage of the indole moiety. This Bacillus cereus (strain ATCC 10987 / NRS 248) protein is Tryptophan 2,3-dioxygenase.